A 260-amino-acid polypeptide reads, in one-letter code: Flap endonuclease Xni (260 aa).

Position 105 (aspartate 105) interacts with Mg(2+). The 91-residue stretch at 164–254 folds into the 5'-3' exonuclease domain; that stretch reads SQFLDLLALA…LKDFRVNGPA (91 aa). Residues leucine 172, alanine 173, proline 181, isoleucine 183, and isoleucine 186 each contribute to the K(+) site. The segment at 185-190 is interaction with DNA; that stretch reads GIGPKS.

Belongs to the Xni family. Mg(2+) serves as cofactor. The cofactor is K(+).

Has flap endonuclease activity. During DNA replication, flap endonucleases cleave the 5'-overhanging flap structure that is generated by displacement synthesis when DNA polymerase encounters the 5'-end of a downstream Okazaki fragment. This is Flap endonuclease Xni from Shewanella sp. (strain ANA-3).